A 701-amino-acid chain; its full sequence is MSQEVLEDLAKVRNIGIMAHIDAGKTTTTERILFYTGITHKIGEVHDGAAAMDWMAQEQERGITITSAATTCFWGGNQINIIDTPGHVDFTVEVERSLRVLDGAVAVFDGKEGVEPQSETVWRQADKYKVPRICFVNKMDKIGADFHFTVKTVVDRLGATPLVIQLPIGSESTFEGVIDLVEMRALTWRGDAKGDVKMGAEYAVEPIPEDLKQQADEFRQKLIETVAENDEALLEKFFSGEEITVAELKSAIRRLTVSGSLYPILCGSSFKNRGVQPMLDAVVDYLPSPLDVPPVTGVDADNPQERLADVSQPFSALAFKVAVHPFFGRLTYIRVYSGTLPAGSQIVNSTKSRKERFGKVFQMHSNKENPVPKMSAGHIYAVIGLKYTTTGDTLCDQDNPIILESMTFPDPVIEVAIEPKTKADQEKLSLAIQRLAEEDPTFKTEQNPETGQTVIKGMGELHLDILVDRMRREFNVEANVGTPQVAYRETIRRTVEKHEYTHKKQTGGAGQFARVIITLEPLEVTGEKTYDFVDTVTGGRIPKEYIPSVDAGIRDAMQVGVLAGYPTVGIKATLVDGAYHDVDSSEMAFRIAGSQAFKEASRRADPTLLEPIMSVEVRTPDEYMGDVIGDLNSRRGHIQSMQDSSGIKVIQARVPLSEMFGYIGDLRSKTSGRAVYSMTFDGYAEAPKSVTEEVVRKARGE.

Positions 10–290 (AKVRNIGIMA…AVVDYLPSPL (281 aa)) constitute a tr-type G domain. GTP-binding positions include 19–26 (AHIDAGKT), 83–87 (DTPGH), and 137–140 (NKMD).

The protein belongs to the TRAFAC class translation factor GTPase superfamily. Classic translation factor GTPase family. EF-G/EF-2 subfamily.

The protein localises to the cytoplasm. Catalyzes the GTP-dependent ribosomal translocation step during translation elongation. During this step, the ribosome changes from the pre-translocational (PRE) to the post-translocational (POST) state as the newly formed A-site-bound peptidyl-tRNA and P-site-bound deacylated tRNA move to the P and E sites, respectively. Catalyzes the coordinated movement of the two tRNA molecules, the mRNA and conformational changes in the ribosome. The chain is Elongation factor G from Tropheryma whipplei (strain Twist) (Whipple's bacillus).